The primary structure comprises 599 residues: 1-deoxy-D-xylulose-5-phosphate synthase (599 aa).

Thiamine diphosphate contacts are provided by residues H63 and 104 to 106 (GHS). D135 provides a ligand contact to Mg(2+). Thiamine diphosphate contacts are provided by residues 136–137 (GA), N164, Y271, and E352. Position 164 (N164) interacts with Mg(2+).

It belongs to the transketolase family. DXPS subfamily. As to quaternary structure, homodimer. The cofactor is Mg(2+). It depends on thiamine diphosphate as a cofactor.

The enzyme catalyses D-glyceraldehyde 3-phosphate + pyruvate + H(+) = 1-deoxy-D-xylulose 5-phosphate + CO2. Its pathway is metabolic intermediate biosynthesis; 1-deoxy-D-xylulose 5-phosphate biosynthesis; 1-deoxy-D-xylulose 5-phosphate from D-glyceraldehyde 3-phosphate and pyruvate: step 1/1. Catalyzes the acyloin condensation reaction between C atoms 2 and 3 of pyruvate and glyceraldehyde 3-phosphate to yield 1-deoxy-D-xylulose-5-phosphate (DXP). This Nitratiruptor sp. (strain SB155-2) protein is 1-deoxy-D-xylulose-5-phosphate synthase.